Consider the following 175-residue polypeptide: ADP-ribosylation factor 6 (175 aa).

A lipid anchor (N-myristoyl glycine) is attached at Gly2. Lys3 carries the N6-myristoyl lysine lipid modification. GTP-binding positions include 23-28, 41-44, 63-67, 122-125, and 155-156; these read AAGKTT, TIPT, DVGGQ, NKQD, and CA.

It belongs to the small GTPase superfamily. Arf family.

It localises to the cytoplasm. Its subcellular location is the cytosol. It is found in the cell membrane. The protein resides in the endosome membrane. The protein localises to the recycling endosome membrane. It localises to the cell projection. Its subcellular location is the filopodium membrane. It is found in the ruffle. The protein resides in the cleavage furrow. The protein localises to the midbody. It localises to the midbody ring. The enzyme catalyses GTP + H2O = GDP + phosphate + H(+). Its function is as follows. GTP-binding protein involved in protein trafficking; regulates endocytic recycling and cytoskeleton remodeling. May modulate vesicle budding and uncoating within the Golgi apparatus. May contribute to the regulation of dendritic branching, filopodia extension and dendritic spine development. The chain is ADP-ribosylation factor 6 (ARF6) from Gallus gallus (Chicken).